We begin with the raw amino-acid sequence, 31 residues long: Conotoxin pc6b (31 aa).

Cystine bridges form between Cys-2–Cys-20, Cys-9–Cys-25, and Cys-19–Cys-29.

Belongs to the conotoxin O1 superfamily. In terms of tissue distribution, expressed by the venom duct.

It is found in the secreted. The chain is Conotoxin pc6b from Conus pictus (Cone snail).